The following is a 78-amino-acid chain: FXYD domain-containing ion transport regulator 7 (78 aa).

The Extracellular segment spans residues 1-22 (MATQVPTKVPQDPDPFYYDYDT). 2 O-linked (GlcNAc) threonine glycosylation sites follow: Thr3 and Thr7. The chain crosses the membrane as a helical span at residues 23–43 (VQTVGMTLATILFLLGILIIL). Residues 44-78 (SKKVKCRKADSRSESPTCKSCKSELPSSAPGGGGV) are Cytoplasmic-facing. Residues 52 to 78 (ADSRSESPTCKSCKSELPSSAPGGGGV) form a disordered region. The residue at position 71 (Ser71) is a Phosphoserine.

The protein belongs to the FXYD family. In terms of assembly, regulatory subunit of the sodium/potassium-transporting ATPase which is composed of a catalytic alpha subunit, a non-catalytic beta subunit and an additional regulatory subunit. The regulatory subunit, a member of the FXYD protein family, modulates the enzymatic activity in a tissue- and isoform-specific way by changing affinities of the Na+/K+-ATPase toward Na(+), K(+) or ATP. O-glycosylated; required for stabilization and translocation to the plasma membrane.

The protein resides in the cell membrane. Functionally, associates with and regulates the activity of the sodium/potassium-transporting ATPase (NKA) which catalyzes the hydrolysis of ATP coupled with the exchange of Na(+) and K(+) ions across the plasma membrane. Reduces the apparent affinity for external K(+), an effect that depends on the presence of external Na(+) and voltage. Increases the apparent affinity for intracellular Na(+). The polypeptide is FXYD domain-containing ion transport regulator 7 (FXYD7) (Bos taurus (Bovine)).